The chain runs to 442 residues: Putative FNIP repeat-containing protein L170 (442 aa).

FNIP repeat units lie at residues 213 to 252 (FNSSINSLRNNIRVLKLGNSFNKPIDILPELLEELYIGRG), 253 to 294 (FNSE…LGCF), and 295 to 348 (FNQS…FGMY).

In Acanthamoeba polyphaga mimivirus (APMV), this protein is Putative FNIP repeat-containing protein L170.